A 722-amino-acid polypeptide reads, in one-letter code: Cellulose synthase-like protein G2 (722 aa).

Transmembrane regions (helical) follow at residues 25 to 45 (IYAV…VHSI) and 51 to 71 (TLIT…WATT). Residues aspartate 139 and aspartate 437 contribute to the active site. 6 helical membrane-spanning segments follow: residues 514 to 534 (FWPF…VALI), 548 to 568 (FWLY…DFLL), 583 to 605 (WMVR…TLNL), 635 to 655 (PSSS…LAFM), 660 to 680 (GIFT…FAVV), and 702 to 722 (ICFL…FFLK).

It belongs to the glycosyltransferase 2 family. Plant cellulose synthase-like G subfamily. Expressed in young seedlings, primarily in the vascular tissue.

It is found in the golgi apparatus membrane. Thought to be a Golgi-localized beta-glycan synthase that polymerize the backbones of noncellulosic polysaccharides (hemicelluloses) of plant cell wall. In Arabidopsis thaliana (Mouse-ear cress), this protein is Cellulose synthase-like protein G2 (CSLG2).